We begin with the raw amino-acid sequence, 882 residues long: MPALACLRRLCRHLSPQAVLFLLFVFCLFSVFVSAYYLYGWNRGLEPSADASESDCGDPPPVAPSRLLPIKPVQAVAPSRTDPLVLVFVESLYSQLGQEVVAILESSRFKYRTEIAPGKGDMPTLTDKGRGRFALIIYENILKYVNLDAWNRELLDKYCVAYGVGIIGFFKANENSLLSAQLKGFPLFLHSNLGLKDCSINPKSPLLYVTRPSEVEKGVLPGEDWTVFQSNHSTYEPVLLAKTRSSESIPHLGADAGLHAALHATVVQDLGLHDGIQRVLFGNNLNFWLHKLVFVDAVAFLTGKRLSLPLDRYILVDIDDIFVGKEGTRMKVEDVKALFDTQNELRTHIPNFTFNLGYSGKFFHTGTDAEDAGDDLLLSYVKEFWWFPHMWSHMQPHLFHNQSVLAEQMALNKKFAVEHGIPTDMGYAVAPHHSGVYPVHVQLYEAWKQVWGIRVTSTEEYPHLKPARYRRGFIHNGIMVLPRQTCGLFTHTIFYNEYPGGSSELDKIINGGELFLTVLLNPISIFMTHLSNYGNDRLGLYTFKHLVRFLHSWTNLRLQTLPPVQLAQKYFQIFSEEKDPLWQDPCEDKRHKDIWSKEKTCDRFPKLLIIGPQKTGTTALYLFLGMHPDLSSNYPSSETFEEIQFFNGHNYHKGIDWYMEFFPIPSNTTSDFYFEKSANYFDSEVAPRRAAALLPKAKILSILINPADRAYSWYQHQRAHDDPVALKYTFHEVITAGPDASSKLRALQNRCLVPGWYATHIERWLSAFHANQILVLDGKLLRTEPAKVMDTVQKFLGVTSTVDYHKTLAFDPKKGFWCQLLEGGKTKCLGKSKGRKYPEMDLDSRAFLKDYFRDHNIELSKLLYKMGQTLPTWLREDLQNTR.

Over 1-17 (MPALACLRRLCRHLSPQ) the chain is Cytoplasmic. Residues 1-169 (MPALACLRRL…VAYGVGIIGF (169 aa)) form a sufficient for localization to Golgi membrane region. The helical; Signal-anchor for type II membrane protein transmembrane segment at 18 to 38 (AVLFLLFVFCLFSVFVSAYYL) threads the bilayer. Topologically, residues 39 to 882 (YGWNRGLEPS…WLREDLQNTR (844 aa)) are lumenal. Residues 40–598 (GWNRGLEPSA…KRHKDIWSKE (559 aa)) are heparan sulfate N-deacetylase 1. Asn231, Asn351, and Asn401 each carry an N-linked (GlcNAc...) asparagine glycan. Residues 599–882 (KTCDRFPKLL…WLREDLQNTR (284 aa)) form a heparan sulfate N-sulfotransferase 1 region. Lys614 serves as the catalytic For sulfotransferase activity. Residue 614–618 (KTGTT) coordinates adenosine 3',5'-bisphosphate. Asn667 carries N-linked (GlcNAc...) asparagine glycosylation. Residues Ser712 and Trp817 each contribute to the adenosine 3',5'-bisphosphate site. An intrachain disulfide couples Cys818 to Cys828. 833–837 (KGRKY) serves as a coordination point for adenosine 3',5'-bisphosphate.

It belongs to the sulfotransferase 1 family. NDST subfamily. As to quaternary structure, monomer. Interacts with heparan sulfate co-polymerase subunits EXT1 and EXT2. As to expression, widely expressed in adult and throughout development.

It is found in the golgi apparatus membrane. The protein localises to the golgi apparatus. It localises to the trans-Golgi network membrane. The protein resides in the cis-Golgi network membrane. The enzyme catalyses N-acetyl-alpha-D-glucosaminyl-[heparan sulfate](n) + H2O = alpha-D-glucosaminyl-[heparan sulfate](n) + acetate. It catalyses the reaction alpha-D-glucosaminyl-[heparan sulfate](n) + 3'-phosphoadenylyl sulfate = N-sulfo-alpha-D-glucosaminyl-[heparan sulfate](n) + adenosine 3',5'-bisphosphate + 2 H(+). It functions in the pathway glycan metabolism; heparan sulfate biosynthesis. It participates in glycan metabolism; heparin biosynthesis. With respect to regulation, inhibited by long N-sulfated sequences (more than 6 sugar residues) accumulating in its substrates heparan sulfate, and heparin. Functionally, essential bifunctional enzyme that catalyzes both the N-deacetylation and the N-sulfation of glucosamine (GlcNAc) of the glycosaminoglycan in heparan sulfate. Modifies the GlcNAc-GlcA disaccharide repeating sugar backbone to make N-sulfated heparosan, a prerequisite substrate for later modifications in heparin biosynthesis. Plays a role in determining the extent and pattern of sulfation of heparan sulfate. Participates in biosynthesis of heparan sulfate that can ultimately serve as L-selectin ligands, thereby playing a role in inflammatory response. Required for the exosomal release of SDCBP, CD63 and syndecan. This is Bifunctional heparan sulfate N-deacetylase/N-sulfotransferase 1 from Mus musculus (Mouse).